We begin with the raw amino-acid sequence, 73 residues long: Translation initiation factor IF-1 (73 aa).

Positions 1–72 constitute an S1-like domain; the sequence is MSKDDLIQFT…TKGRVILRHQ (72 aa).

It belongs to the IF-1 family. Component of the 30S ribosomal translation pre-initiation complex which assembles on the 30S ribosome in the order IF-2 and IF-3, IF-1 and N-formylmethionyl-tRNA(fMet); mRNA recruitment can occur at any time during PIC assembly.

It localises to the cytoplasm. Functionally, one of the essential components for the initiation of protein synthesis. Stabilizes the binding of IF-2 and IF-3 on the 30S subunit to which N-formylmethionyl-tRNA(fMet) subsequently binds. Helps modulate mRNA selection, yielding the 30S pre-initiation complex (PIC). Upon addition of the 50S ribosomal subunit IF-1, IF-2 and IF-3 are released leaving the mature 70S translation initiation complex. This Rickettsia bellii (strain OSU 85-389) protein is Translation initiation factor IF-1.